Reading from the N-terminus, the 514-residue chain is Sugar transport protein 3 (514 aa).

The Cytoplasmic portion of the chain corresponds to 1–19 (MVAEEARKEAMAKSVSGGK). 12 consecutive transmembrane segments (helical) span residues 20 to 40 (ITYF…IFGY), 87 to 107 (LLTS…LLAS), 124 to 144 (VSFL…MLII), 147 to 167 (LLLG…LSEM), 174 to 194 (GAIS…ANVI), 207 to 227 (ISLA…LFLP), 289 to 309 (LVMA…VVAF), 327 to 347 (MSTL…MLVV), 356 to 376 (FLIG…IVMV), 392 to 412 (VVVL…PLGW), 430 to 450 (VTVA…PPML), and 456 to 476 (GIFF…QLFL). Residues 477–514 (PETKNVPIEKVVGLWEKHWFWRRMTSKRDIQETTILSH) lie on the Cytoplasmic side of the membrane.

This sequence belongs to the major facilitator superfamily. Sugar transporter (TC 2.A.1.1) family.

The protein resides in the membrane. Its function is as follows. Mediates an active uptake of hexoses, probably by sugar/hydrogen symport. This is Sugar transport protein 3 (STP3) from Arabidopsis thaliana (Mouse-ear cress).